We begin with the raw amino-acid sequence, 340 residues long: Phenylalanine--tRNA ligase alpha subunit (340 aa).

Glu255 provides a ligand contact to Mg(2+).

It belongs to the class-II aminoacyl-tRNA synthetase family. Phe-tRNA synthetase alpha subunit type 1 subfamily. Tetramer of two alpha and two beta subunits. Requires Mg(2+) as cofactor.

It is found in the cytoplasm. It catalyses the reaction tRNA(Phe) + L-phenylalanine + ATP = L-phenylalanyl-tRNA(Phe) + AMP + diphosphate + H(+). The sequence is that of Phenylalanine--tRNA ligase alpha subunit from Moorella thermoacetica (strain ATCC 39073 / JCM 9320).